A 361-amino-acid chain; its full sequence is MESGHRFDAQTLHSFIQAVFRQMGSEEQEAKLVADHLIAANLAGHDSHGIGMIPSYVRSWSQGHLQINHHAKTVKEAGAAVTLDGDRAFGQVAAHEAMALGIEKAHQHGIAAVALHNSHHIGRIGYWAEQCAAAGFVSIHFVSVVGIPMVAPFHGRDSRFGTNPFCVVFPRKDNFPLLLDYATSAIAFGKTRVAWHKGVPVPPGCLIDVNGVPTTNPAVMQESPLGSLLTFAEHKGYALAAMCEILGGALSGGKTTHQETLQTSPDAILNCMTTIIINPELFGAPDCNAQTEAFAEWVKASPHDDDKPILLPGEWEVNTRRERQKQGIPLDAGSWQAICDAARQIGMPEETLQAFCQQLAS.

NAD(+)-binding positions include His48, 122-124 (GRI), 178-182 (LLDYA), His234, Asn270, and 313-316 (GEWE).

Belongs to the LDH2/MDH2 oxidoreductase family.

The enzyme catalyses 2-hydroxyglutarate + NADP(+) = 2-oxoglutarate + NADPH + H(+). It carries out the reaction 2-hydroxyglutarate + NAD(+) = 2-oxoglutarate + NADH + H(+). It catalyses the reaction 3-phenyllactate + NADP(+) = 3-phenylpyruvate + NADPH + H(+). The catalysed reaction is 3-phenyllactate + NAD(+) = 3-phenylpyruvate + NADH + H(+). The enzyme catalyses (2R)-2-hydroxy-3-(4-hydroxyphenyl)propanoate + NAD(+) = 3-(4-hydroxyphenyl)pyruvate + NADH + H(+). It carries out the reaction (2R)-2-hydroxy-3-(4-hydroxyphenyl)propanoate + NADP(+) = 3-(4-hydroxyphenyl)pyruvate + NADPH + H(+). It catalyses the reaction (2R)-3-(3,4-dihydroxyphenyl)lactate + NADP(+) = 3-(3,4-dihydroxyphenyl)pyruvate + NADPH + H(+). The catalysed reaction is (2R)-3-(3,4-dihydroxyphenyl)lactate + NAD(+) = 3-(3,4-dihydroxyphenyl)pyruvate + NADH + H(+). In terms of biological role, catalyzes the NAD(P)H-dependent reduction of 2-oxoglutarate, phenylpyruvate and (4-hydroxyphenyl)pyruvate, leading to the respective 2-hydroxycarboxylate in vitro. Shows a preference for NADPH over NADH as a redox partner. Do not catalyze the reverse reactions. The protein is Hydroxycarboxylate dehydrogenase B of Escherichia coli (strain K12).